A 162-amino-acid polypeptide reads, in one-letter code: NADH-ubiquinone oxidoreductase 24 kDa subunit homolog C11E3.12, mitochondrial (162 aa).

The [2Fe-2S] cluster site is built by cysteine 88, cysteine 93, cysteine 125, and cysteine 129.

Belongs to the complex I 24 kDa subunit family. [2Fe-2S] cluster serves as cofactor.

It is found in the mitochondrion. In Schizosaccharomyces pombe (strain 972 / ATCC 24843) (Fission yeast), this protein is NADH-ubiquinone oxidoreductase 24 kDa subunit homolog C11E3.12, mitochondrial.